Reading from the N-terminus, the 207-residue chain is Nuclear transcription factor Y subunit beta (207 aa).

Positions 1 to 52 (MTMDGDSSTTDASQLGISADYIGGSHYVIQPHDDTEDSMNDHEDTNGSKESF) are a domain. Residues 27–52 (YVIQPHDDTEDSMNDHEDTNGSKESF) form a disordered region. Over residues 39–52 (MNDHEDTNGSKESF) the composition is skewed to basic and acidic residues. Residues 53 to 142 (REQDIYLPIA…PLKLYLQKFR (90 aa)) are b domain. Residues 59–65 (LPIANVA) mediate DNA binding. Residues 86-97 (VQECVSEFISFI) are subunit association domain (SAD). Lys140 is covalently cross-linked (Glycyl lysine isopeptide (Lys-Gly) (interchain with G-Cter in ubiquitin)). The interval 143 to 207 (EAMKGEKGIG…ISGVQQIQFS (65 aa)) is c domain.

The protein belongs to the NFYB/HAP3 subunit family. Heterotrimeric transcription factor composed of three components, NF-YA, NF-YB and NF-YC. NF-YB and NF-YC must interact and dimerize for NF-YA association and DNA binding. Interacts with C1QBP. In terms of processing, monoubiquitination at Lys-140 plays an important role in transcriptional activation by allowing the deposition of histone H3 methylations as well as histone H2B monoubiquitination at 'Lys-121'.

The protein localises to the nucleus. Its function is as follows. Component of the sequence-specific heterotrimeric transcription factor (NF-Y) which specifically recognizes a 5'-CCAAT-3' box motif found in the promoters of its target genes. NF-Y can function as both an activator and a repressor, depending on its interacting cofactors. The polypeptide is Nuclear transcription factor Y subunit beta (NFYB) (Bos taurus (Bovine)).